The following is a 443-amino-acid chain: RILP-like protein homolog (443 aa).

The RH1 domain maps to 8–96 (EMGEMVLDAI…ESEKLEKAEF (89 aa)). Positions 59 to 315 (LELLEALATK…TLNEQLAELK (257 aa)) form a coiled coil. The RH2 domain occupies 282 to 401 (RPRYTTRELK…KSSESGIRKF (120 aa)). The interval 311-394 (LAELKPPSQA…PDDAPWKKSS (84 aa)) is disordered. Residues 332-355 (DDSDEDDDGHVADNDDDDDEEEAA) show a composition bias toward acidic residues. Residues 356–368 (AEANELEPPAAGE) show a composition bias toward low complexity.

The protein belongs to the RILPL family. In terms of assembly, interacts with Arl8 (in GTP-bound form).

It is found in the lysosome membrane. Its function is as follows. May have a role in lysosome distribution by interacting with Arl8. This Drosophila melanogaster (Fruit fly) protein is RILP-like protein homolog.